The following is a 747-amino-acid chain: Asparagine synthetase [glutamine-hydrolyzing] 2 (747 aa).

The active-site For GATase activity is cysteine 2. The Glutamine amidotransferase type-2 domain occupies 2–218 (CGLAGIINLA…AGHYLEINLT (217 aa)). L-glutamine contacts are provided by residues 52-56 (RLSIL), 77-79 (NGE), and aspartate 100. 395-396 (SP) is a binding site for ATP.

This sequence belongs to the asparagine synthetase family.

The catalysed reaction is L-aspartate + L-glutamine + ATP + H2O = L-asparagine + L-glutamate + AMP + diphosphate + H(+). The protein operates within amino-acid biosynthesis; L-asparagine biosynthesis; L-asparagine from L-aspartate (L-Gln route): step 1/1. The polypeptide is Asparagine synthetase [glutamine-hydrolyzing] 2 (asnH) (Bacillus subtilis (strain 168)).